Here is a 334-residue protein sequence, read N- to C-terminus: Desumoylating isopeptidase 1 homolog (334 aa).

The region spanning 30-174 (TVVRLNVYDM…FLEKCIPQEW (145 aa)) is the PPPDE domain. Catalysis depends on residues His-55 and Cys-133. The segment covering 310-325 (SNIGKTNSTPGTTSNG) has biased composition (polar residues). Residues 310-334 (SNIGKTNSTPGTTSNGLAKPTCSEC) are disordered.

The protein belongs to the DeSI family. In terms of tissue distribution, expressed in the pharynx, hypodermis, intestine, head neuron and tail neuron.

Its subcellular location is the cytoplasm. The protein localises to the nucleus. In terms of biological role, protease which deconjugates SUMO from some substrate proteins. Has isopeptidase but not SUMO-processing activity. Collaborates with ubql-1 in the export of ubiquitinated proteins from the nucleus to the cytoplasm. In Caenorhabditis elegans, this protein is Desumoylating isopeptidase 1 homolog.